A 568-amino-acid polypeptide reads, in one-letter code: Protein yellow (568 aa).

The N-terminal stretch at 1-28 (MHAQDKGGILPALSLLLIAVAMVSPSQA) is a signal peptide. 2 N-linked (GlcNAc...) asparagine glycosylation sites follow: N151 and N222.

Belongs to the major royal jelly protein family.

The protein resides in the secreted. Controls the pigmentation pattern of the adult cuticle and larval mouth parts. The protein is Protein yellow (y) of Drosophila madeirensis (Fruit fly).